Here is a 520-residue protein sequence, read N- to C-terminus: L-tyrosine:2-oxoglutarate aminotransferase amt1 (520 aa).

Belongs to the class-I pyridoxal-phosphate-dependent aminotransferase family. Pyridoxal 5'-phosphate is required as a cofactor.

It carries out the reaction L-tyrosine + 2-oxoglutarate = 3-(4-hydroxyphenyl)pyruvate + L-glutamate. It participates in secondary metabolite biosynthesis. An L-tyrosine:2-oxoglutarate aminotransferase (probably amt1) and atromentin synthetase nps3 catalyze consecutive steps to turn over L-tyrosine into atromentin, which represents the generic precursor molecule for the entire terphenylquinone and pulvinic acid family of pigments, which are widely distributed secondary metabolites in homobasidiomycetes. The first step catalyzed by amt1 converts L-tyrosine in to 4-hydroxyphenylpyruvate (4-HPP). Adenylation of two 4-HPP monomers by the nps3 adenylation (A) domain, covalent tethering of the monomers as a thioester and oxoester onto the nps3 thiolation (T) and thioesterase (TE) domains, respectively, and symmetric C-C-bond formation between two monomers catalyzed by the nps3 TE domain leads to atromentin. Follow-up products of atromentin in S.lacrymans include atromentic acid, xerocomic acid, isoxerocomic acid and variegatic acid. The chain is L-tyrosine:2-oxoglutarate aminotransferase amt1 (amt1) from Serpula lacrymans var. lacrymans (strain S7.9) (Dry rot fungus).